Reading from the N-terminus, the 48-residue chain is uncharacterized protein (48 aa).

This is an uncharacterized protein from His1 virus (isolate Australia/Victoria) (His1V).